An 873-amino-acid chain; its full sequence is Leucine--tRNA ligase (873 aa).

The 'HIGH' region motif lies at 48 to 58 (PYPSGKLHMGH). The 'KMSKS' region motif lies at 636–640 (KMSKS). Lys-639 is an ATP binding site.

It belongs to the class-I aminoacyl-tRNA synthetase family.

It localises to the cytoplasm. The catalysed reaction is tRNA(Leu) + L-leucine + ATP = L-leucyl-tRNA(Leu) + AMP + diphosphate. This is Leucine--tRNA ligase from Cupriavidus metallidurans (strain ATCC 43123 / DSM 2839 / NBRC 102507 / CH34) (Ralstonia metallidurans).